The primary structure comprises 148 residues: D-aminoacyl-tRNA deacylase (148 aa).

Residues 137–138 carry the Gly-cisPro motif, important for rejection of L-amino acids motif; sequence GP.

The protein belongs to the DTD family. As to quaternary structure, homodimer.

It is found in the cytoplasm. The catalysed reaction is glycyl-tRNA(Ala) + H2O = tRNA(Ala) + glycine + H(+). The enzyme catalyses a D-aminoacyl-tRNA + H2O = a tRNA + a D-alpha-amino acid + H(+). An aminoacyl-tRNA editing enzyme that deacylates mischarged D-aminoacyl-tRNAs. Also deacylates mischarged glycyl-tRNA(Ala), protecting cells against glycine mischarging by AlaRS. Acts via tRNA-based rather than protein-based catalysis; rejects L-amino acids rather than detecting D-amino acids in the active site. By recycling D-aminoacyl-tRNA to D-amino acids and free tRNA molecules, this enzyme counteracts the toxicity associated with the formation of D-aminoacyl-tRNA entities in vivo and helps enforce protein L-homochirality. The polypeptide is D-aminoacyl-tRNA deacylase (Enterococcus faecalis (strain ATCC 700802 / V583)).